The following is a 549-amino-acid chain: Cytochrome c oxidase subunit 1 (549 aa).

Residues Leu-18–Ile-38 traverse the membrane as a helical segment. Ca(2+) contacts are provided by Glu-41 and Gly-46. Residues Leu-42–Thr-62 form a helical membrane-spanning segment. Position 64 (His-64) interacts with Fe(II)-heme a. 5 consecutive transmembrane segments (helical) span residues Leu-66 to Ile-86, Leu-100 to Leu-120, Phe-148 to Leu-168, Leu-186 to Ala-206, and Phe-222 to Gly-242. Residue His-243 participates in Cu cation binding. Positions His-243–Tyr-247 form a cross-link, 1'-histidyl-3'-tyrosine (His-Tyr). 2 helical membrane passes run Val-246–Phe-266 and Val-269–Val-289. Tyr-247 is a binding site for O2. 2 residues coordinate Cu cation: His-292 and His-293. The next 2 membrane-spanning stretches (helical) occupy residues Tyr-306–Ile-326 and Val-340–Leu-360. Residues His-370 and Asp-371 each contribute to the Mg(2+) site. His-378 contacts heme a3. Helical transmembrane passes span Phe-379–Leu-399, Trp-402–Gly-422, Met-460–Trp-480, Leu-484–Leu-504, and Ile-520–Trp-540. His-380 contacts Fe(II)-heme a.

This sequence belongs to the heme-copper respiratory oxidase family. As to quaternary structure, component of the cytochrome c oxidase (complex IV, CIV), a multisubunit enzyme composed of a catalytic core of 3 subunits and several supernumerary subunits. The complex exists as a monomer or a dimer and forms supercomplexes (SCs) in the inner mitochondrial membrane with ubiquinol-cytochrome c oxidoreductase (cytochrome b-c1 complex, complex III, CIII). Heme is required as a cofactor. Cu cation serves as cofactor.

It is found in the mitochondrion inner membrane. The enzyme catalyses 4 Fe(II)-[cytochrome c] + O2 + 8 H(+)(in) = 4 Fe(III)-[cytochrome c] + 2 H2O + 4 H(+)(out). It participates in energy metabolism; oxidative phosphorylation. Functionally, component of the cytochrome c oxidase, the last enzyme in the mitochondrial electron transport chain which drives oxidative phosphorylation. The respiratory chain contains 3 multisubunit complexes succinate dehydrogenase (complex II, CII), ubiquinol-cytochrome c oxidoreductase (cytochrome b-c1 complex, complex III, CIII) and cytochrome c oxidase (complex IV, CIV), that cooperate to transfer electrons derived from NADH and succinate to molecular oxygen, creating an electrochemical gradient over the inner membrane that drives transmembrane transport and the ATP synthase. Cytochrome c oxidase is the component of the respiratory chain that catalyzes the reduction of oxygen to water. Electrons originating from reduced cytochrome c in the intermembrane space (IMS) are transferred via the dinuclear copper A center (CU(A)) of subunit 2 and heme A of subunit 1 to the active site in subunit 1, a binuclear center (BNC) formed by heme A3 and copper B (CU(B)). The BNC reduces molecular oxygen to 2 water molecules using 4 electrons from cytochrome c in the IMS and 4 protons from the mitochondrial matrix. The polypeptide is Cytochrome c oxidase subunit 1 (COI) (Leishmania tarentolae (Sauroleishmania tarentolae)).